Here is a 976-residue protein sequence, read N- to C-terminus: Vacuolar membrane protease (976 aa).

Residues M1 to K15 lie on the Cytoplasmic side of the membrane. A helical transmembrane segment spans residues T16–D36. The Vacuolar segment spans residues H37–L359. Residues N96 and N121 are each glycosylated (N-linked (GlcNAc...) asparagine). Residues H156 and D168 each coordinate Zn(2+). An N-linked (GlcNAc...) asparagine glycan is attached at N189. The active-site Proton acceptor is the E200. A Zn(2+)-binding site is contributed by E201. An N-linked (GlcNAc...) asparagine glycan is attached at N217. 2 residues coordinate Zn(2+): E226 and H300. A helical membrane pass occupies residues F360–I380. At S381–W392 the chain is on the cytoplasmic side. Residues L393–F412 form a helical membrane-spanning segment. Residues S413 to Y428 lie on the Vacuolar side of the membrane. A helical membrane pass occupies residues F429–C449. The Cytoplasmic segment spans residues S450–S461. Residues L462–L482 traverse the membrane as a helical segment. Residues Y483 to S496 are Vacuolar-facing. A helical transmembrane segment spans residues I497 to M517. The Cytoplasmic portion of the chain corresponds to R518 to Y627. The interval R528–E610 is disordered. Residues N549–T558 show a composition bias toward polar residues. The segment covering S559 to D570 has biased composition (low complexity). The span at N582 to P601 shows a compositional bias: basic and acidic residues. A helical transmembrane segment spans residues A628–V648. The Vacuolar portion of the chain corresponds to D649–D668. A glycan (N-linked (GlcNAc...) asparagine) is linked at N656. A helical transmembrane segment spans residues V669–Y689. Residues K690–N692 lie on the Cytoplasmic side of the membrane. Residues Y693 to V713 traverse the membrane as a helical segment. Residues H714–L976 lie on the Vacuolar side of the membrane. N-linked (GlcNAc...) asparagine glycosylation is found at N768, N796, N811, N866, and N937.

This sequence belongs to the peptidase M28 family. Zn(2+) is required as a cofactor. In terms of processing, N-glycosylated.

It localises to the vacuole membrane. Its function is as follows. May be involved in vacuolar sorting and osmoregulation. The chain is Vacuolar membrane protease from Saccharomyces cerevisiae (strain ATCC 204508 / S288c) (Baker's yeast).